Here is a 564-residue protein sequence, read N- to C-terminus: 4-hydroxy-7-methoxy-3-oxo-3,4-dihydro-2H-1,4-benzoxazin-2-yl glucoside beta-D-glucosidase 1d, chloroplastic (564 aa).

Residues 1 to 50 constitute a chloroplast transit peptide; that stretch reads MALLAAATLNPTTHLSLRSRAGRNSENLWLRSAASSQKSKGRFCNLTVRA. A beta-D-glucoside contacts are provided by residues Gln-92, His-194, and 239 to 240; that span reads NE. Glu-240 acts as the Proton donor in catalysis. Cys-259 and Cys-265 are joined by a disulfide. Residues Tyr-383, Glu-456, Trp-504, 511–512, and Phe-520 each bind a beta-D-glucoside; that span reads EW. Catalysis depends on Glu-456, which acts as the Nucleophile.

Belongs to the glycosyl hydrolase 1 family. As to quaternary structure, homo- and heterohexamers. Expressed in young seedlings early after germination.

It is found in the plastid. It localises to the chloroplast. The enzyme catalyses Hydrolysis of terminal, non-reducing beta-D-glucosyl residues with release of beta-D-glucose.. It catalyses the reaction DIMBOA beta-D-glucoside + H2O = DIMBOA + D-glucose. The catalysed reaction is DIBOA beta-D-glucoside + H2O = DIBOA + D-glucose. In terms of biological role, acts in defense of young plant parts against pests via the production of hydroxamic acids from hydroxamic acid glucosides. Enzymatic activity is highly correlated with plant growth. The preferred substrate is DIMBOA-beta-D-glucoside. The chain is 4-hydroxy-7-methoxy-3-oxo-3,4-dihydro-2H-1,4-benzoxazin-2-yl glucoside beta-D-glucosidase 1d, chloroplastic (GLU1D) from Triticum aestivum (Wheat).